The following is a 493-amino-acid chain: Protein translocase subunit SecY (493 aa).

Topologically, residues 1–21 are cytoplasmic; the sequence is MDSVIRALQPYFERIPSVERP. Residues 22 to 48 traverse the membrane as a helical segment; sequence KGHVHFREKFGWTAAILLLYFILSNVP. Residues 49–59 lie on the Extracellular side of the membrane; sequence VFGLSPESIDI. An intramembrane region (helical) is located at residues 60–67; the sequence is FAAYRALF. A discontinuously helical membrane pass occupies residues 60–88; it reads FAAYRALFAGSTGSIIALGIGPIVTASII. An intramembrane segment occupies 68–79; the sequence is AGSTGSIIALGI. The helical intramembrane region spans 80-88; the sequence is GPIVTASII. Topologically, residues 89–109 are cytoplasmic; that stretch reads LQLLVGAGIIKLDLTNPEDRA. Residues 110 to 134 traverse the membrane as a helical segment; that stretch reads AYQDFQRFLVFVMIAVEAIPQIAGG. Residues 135-151 are Extracellular-facing; the sequence is LLKPDLNLAAQLGVSPG. Residues 152-176 form a helical membrane-spanning segment; the sequence is IISFLIFIQLFIGGVLIVYMDEVVS. At 177 to 182 the chain is on the cytoplasmic side; sequence KWGIGS. The chain crosses the membrane as a helical span at residues 183-201; sequence GVSLFILAGIAQSIVVGLF. Topologically, residues 202–244 are extracellular; the sequence is NWVIPPNSAMPAGIIPRWIWIAQNYPLDQLFTGSGLAFLLIQG. Residues 245–266 traverse the membrane as a helical segment; the sequence is GILALITTAAIILLVVFFEGTR. The Cytoplasmic segment spans residues 267–291; that stretch reads VEIPLAHAVARGARGRFPIKLIYAS. Residues 292–313 form a helical membrane-spanning segment; sequence VLPMIFVRALQANVVALGQVLH. Over 314 to 367 the chain is Extracellular; it reads ARGVTIFGEFVNGKAVSGLMFFLQPVSSPYDWIPSLVKSQGAAFAAIPDWMIYL. A helical transmembrane segment spans residues 368-387; sequence HLLIDALILVVGGIIFAWFW. Topologically, residues 388-430 are cytoplasmic; the sequence is VETSGMDARTVASQIAKSGMQVPGFRKSPQVLERVLSRYIPKV. Residues 431 to 449 traverse the membrane as a helical segment; that stretch reads TILGGAIIGILTLVANMLG. Residues 450–454 are Extracellular-facing; it reads TIGNV. A helical membrane pass occupies residues 455 to 469; the sequence is SGTGLLLAVSIAYRF. Over 470 to 493 the chain is Cytoplasmic; sequence YEDLAKEQLTEMHPLIRRMLGEEA.

The protein belongs to the SecY/SEC61-alpha family. Component of the Sec protein translocase complex. Heterotrimer consisting of alpha (SecY), beta (SecG) and gamma (SecE) subunits. The heterotrimers can form oligomers, although 1 heterotrimer is thought to be able to translocate proteins. Interacts with the ribosome. May interact with SecDF, and other proteins may be involved.

It is found in the cell membrane. Functionally, the central subunit of the protein translocation channel SecYEG. Consists of two halves formed by TMs 1-5 and 6-10. These two domains form a lateral gate at the front which open onto the bilayer between TMs 2 and 7, and are clamped together by SecE at the back. The channel is closed by both a pore ring composed of hydrophobic SecY resides and a short helix (helix 2A) on the extracellular side of the membrane which forms a plug. The plug probably moves laterally to allow the channel to open. The ring and the pore may move independently. This Archaeoglobus fulgidus (strain ATCC 49558 / DSM 4304 / JCM 9628 / NBRC 100126 / VC-16) protein is Protein translocase subunit SecY.